The sequence spans 262 residues: Tryptophan synthase alpha chain (262 aa).

Catalysis depends on proton acceptor residues Glu48 and Asp59.

Belongs to the TrpA family. As to quaternary structure, tetramer of two alpha and two beta chains.

It catalyses the reaction (1S,2R)-1-C-(indol-3-yl)glycerol 3-phosphate + L-serine = D-glyceraldehyde 3-phosphate + L-tryptophan + H2O. The protein operates within amino-acid biosynthesis; L-tryptophan biosynthesis; L-tryptophan from chorismate: step 5/5. Functionally, the alpha subunit is responsible for the aldol cleavage of indoleglycerol phosphate to indole and glyceraldehyde 3-phosphate. This is Tryptophan synthase alpha chain from Helicobacter pylori (strain Shi470).